A 283-amino-acid polypeptide reads, in one-letter code: Phosphatidylserine decarboxylase proenzyme (283 aa).

Active-site charge relay system; for autoendoproteolytic cleavage activity residues include Asp96, His152, and Ser250. The active-site Schiff-base intermediate with substrate; via pyruvic acid; for decarboxylase activity is Ser250. Ser250 is modified (pyruvic acid (Ser); by autocatalysis).

This sequence belongs to the phosphatidylserine decarboxylase family. PSD-B subfamily. Prokaryotic type I sub-subfamily. In terms of assembly, heterodimer of a large membrane-associated beta subunit and a small pyruvoyl-containing alpha subunit. Pyruvate serves as cofactor. In terms of processing, is synthesized initially as an inactive proenzyme. Formation of the active enzyme involves a self-maturation process in which the active site pyruvoyl group is generated from an internal serine residue via an autocatalytic post-translational modification. Two non-identical subunits are generated from the proenzyme in this reaction, and the pyruvate is formed at the N-terminus of the alpha chain, which is derived from the carboxyl end of the proenzyme. The autoendoproteolytic cleavage occurs by a canonical serine protease mechanism, in which the side chain hydroxyl group of the serine supplies its oxygen atom to form the C-terminus of the beta chain, while the remainder of the serine residue undergoes an oxidative deamination to produce ammonia and the pyruvoyl prosthetic group on the alpha chain. During this reaction, the Ser that is part of the protease active site of the proenzyme becomes the pyruvoyl prosthetic group, which constitutes an essential element of the active site of the mature decarboxylase.

It is found in the cell membrane. The enzyme catalyses a 1,2-diacyl-sn-glycero-3-phospho-L-serine + H(+) = a 1,2-diacyl-sn-glycero-3-phosphoethanolamine + CO2. It functions in the pathway phospholipid metabolism; phosphatidylethanolamine biosynthesis; phosphatidylethanolamine from CDP-diacylglycerol: step 2/2. Functionally, catalyzes the formation of phosphatidylethanolamine (PtdEtn) from phosphatidylserine (PtdSer). The polypeptide is Phosphatidylserine decarboxylase proenzyme (Acinetobacter baumannii (strain ACICU)).